The sequence spans 359 residues: WAT1-related protein At4g28040 (359 aa).

Helical transmembrane passes span 10 to 30, 37 to 57, 66 to 86, 103 to 123, 133 to 153, 170 to 190, 204 to 224, 240 to 260, 266 to 286, and 292 to 312; these read LALVMLQFTSAGVALFTKAAF, TVFVVYRQAIATLFICPISFI, PSLGVRGFWWVALTAVIGVTV, ACAMTNLIPAVTFIISIIVGF, SVAKVIGTGVCVGGAMAMTFL, WLLGCFFLLISTFAWSLWLIL, TSACTCFIATIASFLVALALG, SCCIYSGFQLAISFFLQAWIV, VFSALFNPLSAVIVTFFGALY, and YLGSLLGALAIILGLYIVLWG. An EamA 1 domain is found at 18–131; that stretch reads TSAGVALFTK…GFESIKRRSM (114 aa). One can recognise an EamA 2 domain in the interval 199-310; the sequence is PDHLYTSACT…AIILGLYIVL (112 aa).

Belongs to the drug/metabolite transporter (DMT) superfamily. Plant drug/metabolite exporter (P-DME) (TC 2.A.7.4) family.

It localises to the membrane. The polypeptide is WAT1-related protein At4g28040 (Arabidopsis thaliana (Mouse-ear cress)).